The sequence spans 94 residues: uncharacterized protein (94 aa).

Residues 13 to 33 (IVICLTTIISVTIFYILVSFF) traverse the membrane as a helical segment.

It is found in the membrane. This is an uncharacterized protein from Dictyostelium discoideum (Social amoeba).